Here is a 606-residue protein sequence, read N- to C-terminus: KH domain-containing protein At4g18375 (606 aa).

The segment covering 1 to 10 (MVERKKRKQI) has biased composition (basic residues). The segment at 1–26 (MVERKKRKQIQRNNSESNRNQKRRIS) is disordered. 5 KH domains span residues 35–99 (LVVY…IGFT), 138–210 (NKEC…LFAV), 311–380 (ELVF…VEAV), 394–455 (NVKM…LIQI), and 535–599 (SSAL…ENLV).

The protein resides in the nucleus. The sequence is that of KH domain-containing protein At4g18375 from Arabidopsis thaliana (Mouse-ear cress).